A 130-amino-acid chain; its full sequence is Small ribosomal subunit protein uS9 (130 aa).

Belongs to the universal ribosomal protein uS9 family.

This is Small ribosomal subunit protein uS9 from Buchnera aphidicola subsp. Acyrthosiphon pisum (strain 5A).